A 297-amino-acid polypeptide reads, in one-letter code: tRNA dimethylallyltransferase (297 aa).

10–17 contacts ATP; that stretch reads APTGAGKT. 12–17 contacts substrate; sequence TGAGKT. An interaction with substrate tRNA region spans residues 34-37; it reads DSRQ.

It belongs to the IPP transferase family. Monomer. The cofactor is Mg(2+).

The enzyme catalyses adenosine(37) in tRNA + dimethylallyl diphosphate = N(6)-dimethylallyladenosine(37) in tRNA + diphosphate. Functionally, catalyzes the transfer of a dimethylallyl group onto the adenine at position 37 in tRNAs that read codons beginning with uridine, leading to the formation of N6-(dimethylallyl)adenosine (i(6)A). In Leptospira interrogans serogroup Icterohaemorrhagiae serovar Lai (strain 56601), this protein is tRNA dimethylallyltransferase.